A 289-amino-acid polypeptide reads, in one-letter code: Light-independent protochlorophyllide reductase iron-sulfur ATP-binding protein (289 aa).

ATP contacts are provided by residues 10 to 15 (GIGKST) and Lys-39. Mg(2+) is bound at residue Ser-14. [4Fe-4S] cluster-binding residues include Cys-95 and Cys-129. 180-181 (NR) is a binding site for ATP.

It belongs to the NifH/BchL/ChlL family. Homodimer. Protochlorophyllide reductase is composed of three subunits; ChlL, ChlN and ChlB. The cofactor is [4Fe-4S] cluster.

It is found in the plastid. It localises to the chloroplast. The catalysed reaction is chlorophyllide a + oxidized 2[4Fe-4S]-[ferredoxin] + 2 ADP + 2 phosphate = protochlorophyllide a + reduced 2[4Fe-4S]-[ferredoxin] + 2 ATP + 2 H2O. The protein operates within porphyrin-containing compound metabolism; chlorophyll biosynthesis (light-independent). Functionally, component of the dark-operative protochlorophyllide reductase (DPOR) that uses Mg-ATP and reduced ferredoxin to reduce ring D of protochlorophyllide (Pchlide) to form chlorophyllide a (Chlide). This reaction is light-independent. The L component serves as a unique electron donor to the NB-component of the complex, and binds Mg-ATP. In Marchantia polymorpha (Common liverwort), this protein is Light-independent protochlorophyllide reductase iron-sulfur ATP-binding protein.